The sequence spans 522 residues: Protein nucleotidyltransferase YdiU (522 aa).

ATP is bound by residues Gly109, Gly111, Arg112, Lys132, Asp144, Gly145, Arg195, and Arg202. Residue Asp271 is the Proton acceptor of the active site. 2 residues coordinate Mg(2+): Asn272 and Asp281. Asp281 is an ATP binding site.

It belongs to the SELO family. The cofactor is Mg(2+). Mn(2+) serves as cofactor.

It carries out the reaction L-seryl-[protein] + ATP = 3-O-(5'-adenylyl)-L-seryl-[protein] + diphosphate. The catalysed reaction is L-threonyl-[protein] + ATP = 3-O-(5'-adenylyl)-L-threonyl-[protein] + diphosphate. It catalyses the reaction L-tyrosyl-[protein] + ATP = O-(5'-adenylyl)-L-tyrosyl-[protein] + diphosphate. The enzyme catalyses L-histidyl-[protein] + UTP = N(tele)-(5'-uridylyl)-L-histidyl-[protein] + diphosphate. It carries out the reaction L-seryl-[protein] + UTP = O-(5'-uridylyl)-L-seryl-[protein] + diphosphate. The catalysed reaction is L-tyrosyl-[protein] + UTP = O-(5'-uridylyl)-L-tyrosyl-[protein] + diphosphate. In terms of biological role, nucleotidyltransferase involved in the post-translational modification of proteins. It can catalyze the addition of adenosine monophosphate (AMP) or uridine monophosphate (UMP) to a protein, resulting in modifications known as AMPylation and UMPylation. The sequence is that of Protein nucleotidyltransferase YdiU from Burkholderia multivorans (strain ATCC 17616 / 249).